The primary structure comprises 763 residues: Ethylene receptor 2 (763 aa).

Helical transmembrane passes span 58–78, 86–106, and 115–135; these read FLIA…ATCS, IVLQ…ITMF, and VVLA…ATAI. Cu cation is bound by residues Cys-97 and His-101. The region spanning 190–339 is the GAF domain; the sequence is DRHTILYTTM…VVADQVAVAL (150 aa). Residues 382–615 enclose the Histidine kinase domain; sequence AMYDGMRRPM…TIMLALQFQL (234 aa). One can recognise a Response regulatory domain in the interval 641-760; that stretch reads QVILVDSDDT…ALGDELYRVL (120 aa). At Asp-692 the chain carries 4-aspartylphosphate.

This sequence belongs to the ethylene receptor family. Cu cation serves as cofactor. Post-translationally, autophosphorylated on serine, threonine and tyrosine residues.

The protein localises to the endoplasmic reticulum membrane. The enzyme catalyses ATP + protein L-histidine = ADP + protein N-phospho-L-histidine.. Its function is as follows. Ethylene receptor related to bacterial two-component regulators. Acts as a negative regulator of ethylene signaling. May delay the transition from the vegetative stage to the floral stage by up-regulating GI (GIGANTEA) and RCN1 and cause starch accumulation in stems by down-regulating the alpha-amylase AMY3D. The sequence is that of Ethylene receptor 2 from Oryza sativa subsp. japonica (Rice).